A 62-amino-acid polypeptide reads, in one-letter code: U8-theraphotoxin-Cg1a 1 (62 aa).

The N-terminal stretch at methionine 1 to alanine 21 is a signal peptide. Residues asparagine 22–arginine 29 constitute a propeptide that is removed on maturation. 3 cysteine pairs are disulfide-bonded: cysteine 31–cysteine 46, cysteine 38–cysteine 51, and cysteine 45–cysteine 58.

It belongs to the neurotoxin 10 (Hwtx-1) family. 30 (Jztx-14) subfamily. As to expression, expressed by the venom gland.

It localises to the secreted. Its function is as follows. Probable ion channel inhibitor. In Chilobrachys guangxiensis (Chinese earth tiger tarantula), this protein is U8-theraphotoxin-Cg1a 1.